The following is a 281-amino-acid chain: HTH-type transcriptional activator RamA (281 aa).

The 66-residue stretch at 213–278 folds into the HTH luxR-type domain; the sequence is RIKQTTKLSA…EAVNAARRIG (66 aa).

RamA is a master regulator of acetate metabolism. It positively controls the expression of acnA, aceA, aceB, ack, pta and ramB genes in the presence of acetate. RamA is also a positive regulator of rpf2 gene expression during growth on glucose as the sole carbon source. This is HTH-type transcriptional activator RamA from Corynebacterium glutamicum (strain ATCC 13032 / DSM 20300 / JCM 1318 / BCRC 11384 / CCUG 27702 / LMG 3730 / NBRC 12168 / NCIMB 10025 / NRRL B-2784 / 534).